The primary structure comprises 733 residues: Protein psiM (733 aa).

A signal peptide spans M1 to A26. N-linked (GlcNAc...) asparagine glycans are attached at residues N22, N65, and N96. Residues Q27–T672 lie on the Extracellular side of the membrane. In terms of domain architecture, PA14 spans N114 to D260. N-linked (GlcNAc...) asparagine glycosylation is found at N277, N336, N379, N428, N471, N537, N573, and N641. The helical transmembrane segment at A673–G693 threads the bilayer. At K694–T733 the chain is on the cytoplasmic side.

Belongs to the prespore-cell-inducing factor family.

It is found in the membrane. This Dictyostelium discoideum (Social amoeba) protein is Protein psiM (psiM).